Consider the following 95-residue polypeptide: Co-chaperonin GroES (95 aa).

This sequence belongs to the GroES chaperonin family. As to quaternary structure, heptamer of 7 subunits arranged in a ring. Interacts with the chaperonin GroEL.

Its subcellular location is the cytoplasm. In terms of biological role, together with the chaperonin GroEL, plays an essential role in assisting protein folding. The GroEL-GroES system forms a nano-cage that allows encapsulation of the non-native substrate proteins and provides a physical environment optimized to promote and accelerate protein folding. GroES binds to the apical surface of the GroEL ring, thereby capping the opening of the GroEL channel. The protein is Co-chaperonin GroES of Cereibacter sphaeroides (strain ATCC 17025 / ATH 2.4.3) (Rhodobacter sphaeroides).